The primary structure comprises 212 residues: Imidazole glycerol phosphate synthase subunit HisH (212 aa).

The Glutamine amidotransferase type-1 domain occupies Gln-2–Trp-212. The active-site Nucleophile is Cys-85. Active-site residues include His-194 and Glu-196.

In terms of assembly, heterodimer of HisH and HisF.

It localises to the cytoplasm. The enzyme catalyses 5-[(5-phospho-1-deoxy-D-ribulos-1-ylimino)methylamino]-1-(5-phospho-beta-D-ribosyl)imidazole-4-carboxamide + L-glutamine = D-erythro-1-(imidazol-4-yl)glycerol 3-phosphate + 5-amino-1-(5-phospho-beta-D-ribosyl)imidazole-4-carboxamide + L-glutamate + H(+). The catalysed reaction is L-glutamine + H2O = L-glutamate + NH4(+). Its pathway is amino-acid biosynthesis; L-histidine biosynthesis; L-histidine from 5-phospho-alpha-D-ribose 1-diphosphate: step 5/9. IGPS catalyzes the conversion of PRFAR and glutamine to IGP, AICAR and glutamate. The HisH subunit catalyzes the hydrolysis of glutamine to glutamate and ammonia as part of the synthesis of IGP and AICAR. The resulting ammonia molecule is channeled to the active site of HisF. The sequence is that of Imidazole glycerol phosphate synthase subunit HisH from Neisseria gonorrhoeae (strain ATCC 700825 / FA 1090).